The chain runs to 426 residues: D-tagatose-1,6-bisphosphate aldolase subunit KbaZ (426 aa).

This sequence belongs to the GatZ/KbaZ family. KbaZ subfamily. Forms a complex with KbaY.

The protein operates within carbohydrate metabolism; D-tagatose 6-phosphate degradation; D-glyceraldehyde 3-phosphate and glycerone phosphate from D-tagatose 6-phosphate: step 2/2. In terms of biological role, component of the tagatose-1,6-bisphosphate aldolase KbaYZ that is required for full activity and stability of the Y subunit. Could have a chaperone-like function for the proper and stable folding of KbaY. When expressed alone, KbaZ does not show any aldolase activity. This Escherichia fergusonii (strain ATCC 35469 / DSM 13698 / CCUG 18766 / IAM 14443 / JCM 21226 / LMG 7866 / NBRC 102419 / NCTC 12128 / CDC 0568-73) protein is D-tagatose-1,6-bisphosphate aldolase subunit KbaZ.